The following is a 961-amino-acid chain: FYVE, RhoGEF and PH domain-containing protein 1 (961 aa).

Gly residues predominate over residues 1–11; sequence MHGHRAPGGAG. The segment at 1-353 is disordered; sequence MHGHRAPGGA…DEEEEEEKDR (353 aa). Residues 27–38 are compositionally biased toward low complexity; that stretch reads PPACADSDPGAS. Ser-48 bears the Phosphoserine mark. The span at 125 to 135 shows a compositional bias: basic and acidic residues; the sequence is PHPEGPQRLRS. Pro residues-rich tracts occupy residues 156–165 and 172–190; these read GPKPQVPPKP and RMPP…PLPA. The SH3-binding motif lies at 171-187; it reads PRMPPPLEPIPPPPSRP. The span at 199-213 shows a compositional bias: low complexity; it reads APRAEASPSSAAVSS. Ser-205 carries the post-translational modification Phosphoserine. Residues 231–255 are compositionally biased toward pro residues; the sequence is VPGPSPGPPEPVMLPQPTSQPPVPQ. A compositionally biased stretch (basic and acidic residues) spans 273–284; that stretch reads RDGEKVPNRDSG. Composition is skewed to low complexity over residues 285–294 and 316–325; these read IDSISSPSNS and ALASVPVALA. Over residues 335–351 the composition is skewed to acidic residues; it reads VDSDLEEEDDEEEEEEK. Residues 373 to 561 form the DH domain; sequence KVFHIANELL…ATAAEHSNAA (189 aa). The 100-residue stretch at 590 to 689 folds into the PH 1 domain; the sequence is ELIKEGHILK…WVQAINSTLL (100 aa). Positions 702-726 are disordered; sequence NSTNREDEDTPPNSPNVDLGKRAPT. Thr-711 carries the phosphothreonine modification. Ser-715 carries the post-translational modification Phosphoserine. The FYVE-type zinc finger occupies 730-790; the sequence is EKEVTMCMRC…VCTDCYVALH (61 aa). Residues Cys-736, Cys-739, Cys-753, Cys-756, Cys-761, Cys-764, Cys-782, and Cys-785 each contribute to the Zn(2+) site. Residues 821-921 enclose the PH 2 domain; it reads NSVICSFLHY…WMAVLGRAGR (101 aa). Positions 925–961 are disordered; that stretch reads FCPGPTLSEDREMEEAPVAALGATAEPPESPQTRDKT.

As to quaternary structure, interacts with DBNL/ABP1 and CTTN. May interact with CCPG1. Binds CDC42. As to expression, expressed in fetal heart, brain, lung, kidney and placenta. Less expressed in liver; adult heart, brain, lung, pancreas and skeletal muscle.

It localises to the cytoplasm. Its subcellular location is the cell projection. It is found in the lamellipodium. The protein resides in the ruffle. The protein localises to the cytoskeleton. In terms of biological role, activates CDC42, a member of the Ras-like family of Rho- and Rac proteins, by exchanging bound GDP for free GTP. Plays a role in regulating the actin cytoskeleton and cell shape. The chain is FYVE, RhoGEF and PH domain-containing protein 1 (FGD1) from Homo sapiens (Human).